A 460-amino-acid polypeptide reads, in one-letter code: ATP synthase subunit beta (460 aa).

150 to 157 (GGAGVGKT) lines the ATP pocket.

It belongs to the ATPase alpha/beta chains family. F-type ATPases have 2 components, CF(1) - the catalytic core - and CF(0) - the membrane proton channel. CF(1) has five subunits: alpha(3), beta(3), gamma(1), delta(1), epsilon(1). CF(0) has three main subunits: a(1), b(2) and c(9-12). The alpha and beta chains form an alternating ring which encloses part of the gamma chain. CF(1) is attached to CF(0) by a central stalk formed by the gamma and epsilon chains, while a peripheral stalk is formed by the delta and b chains.

It is found in the cell inner membrane. It carries out the reaction ATP + H2O + 4 H(+)(in) = ADP + phosphate + 5 H(+)(out). In terms of biological role, produces ATP from ADP in the presence of a proton gradient across the membrane. The catalytic sites are hosted primarily by the beta subunits. The polypeptide is ATP synthase subunit beta (Shigella dysenteriae serotype 1 (strain Sd197)).